The sequence spans 255 residues: Putative cysteine-rich repeat secretory protein 13 (255 aa).

Residues 1–21 form the signal peptide; the sequence is MSSNILAMVAMQLLLIRIVSS. Gnk2-homologous domains follow at residues 28–136 and 142–252; these read YLNH…SVNT and YDSF…LYPF.

It belongs to the cysteine-rich repeat secretory protein family.

It localises to the secreted. This is Putative cysteine-rich repeat secretory protein 13 (CRRSP13) from Arabidopsis thaliana (Mouse-ear cress).